The chain runs to 479 residues: Wax ester synthase/diacylglycerol acyltransferase 2 (479 aa).

The Cytoplasmic segment spans residues 1-182 (MAIERQVTEA…VAPKKNKAKN (182 aa)). Histidine 144 acts as the Proton acceptor in catalysis. Residues 183–199 (VCFSLVAWLWFIVRLMF) form a helical membrane-spanning segment. The Lumenal segment spans residues 200–479 (HTCVEVIKSI…PKKVFHASKV (280 aa)). Asparagine 253 carries an N-linked (GlcNAc...) asparagine glycan.

In the N-terminal section; belongs to the long-chain O-acyltransferase family. As to expression, mostly expressed in flowers and siliques and barely in roots and stems.

Its subcellular location is the cell membrane. It localises to the endoplasmic reticulum membrane. It carries out the reaction an acyl-CoA + a 1,2-diacyl-sn-glycerol = a triacyl-sn-glycerol + CoA. It catalyses the reaction a long chain fatty alcohol + a fatty acyl-CoA = a wax ester + CoA. The protein operates within glycerolipid metabolism; triacylglycerol biosynthesis. Its pathway is lipid metabolism. Its function is as follows. Bifunctional wax ester synthase/diacylglycerol acyltransferase. Involved in cuticular wax biosynthesis. The protein is Wax ester synthase/diacylglycerol acyltransferase 2 of Arabidopsis thaliana (Mouse-ear cress).